An 807-amino-acid polypeptide reads, in one-letter code: Glycerol-3-phosphate acyltransferase (807 aa).

The HXXXXD motif motif lies at 305–310 (CHRSHM).

It belongs to the GPAT/DAPAT family.

It localises to the cell inner membrane. The catalysed reaction is sn-glycerol 3-phosphate + an acyl-CoA = a 1-acyl-sn-glycero-3-phosphate + CoA. The protein operates within phospholipid metabolism; CDP-diacylglycerol biosynthesis; CDP-diacylglycerol from sn-glycerol 3-phosphate: step 1/3. The sequence is that of Glycerol-3-phosphate acyltransferase from Klebsiella pneumoniae subsp. pneumoniae (strain ATCC 700721 / MGH 78578).